A 488-amino-acid polypeptide reads, in one-letter code: MGFFSAIKRLWKGDTAPEDVSKPVEAEGSAIVGTSSTGSPVGTGAAMPAAQDAPSPAAPHAIATPDDAVPDDAVPDDAVHGGEAPWKTELTLALRQAEPRLSVWLGHVLDGVDEAGPILWERLRFFFSSLEVPADEAETFVRDFGRWLEAMEYRYVADFRSELQYRLALALDLEDEEDERSRLMLKLTEGLARTREQIGRRIDGLLASHGRIDEGFWEELEEILIMADVGFEPTTQLIGRLRERARKAGTDDPARFRELLREELEVIFRAPRRIAAVNPPEVVLLIGVNGVGKTTTIAKLAYRAQLQGRKVLIAAGDTFRAAAIEQLEIWAKRVGAGFYAKTAGADPAAVAYEAMDKAVSEGYDLLLVDTAGRLHTKANLMEELHKIRKVLGRKHPGAPHRSILVIDATTGQNALSQTKLFNEACGVDEIVLTKLDGTAKGGIVVAVAMQFGIPITYVGLGEKMEDMRPFNGSDFAMALLGVEEKPAA.

Residues 14-82 are disordered; that stretch reads DTAPEDVSKP…AVPDDAVHGG (69 aa). The span at 32–67 shows a compositional bias: low complexity; the sequence is VGTSSTGSPVGTGAAMPAAQDAPSPAAPHAIATPDD. GTP-binding positions include 287 to 294, 369 to 373, and 433 to 436; these read GVNGVGKT, DTAGR, and TKLD.

The protein belongs to the GTP-binding SRP family. FtsY subfamily. As to quaternary structure, part of the signal recognition particle protein translocation system, which is composed of SRP and FtsY. SRP is a ribonucleoprotein composed of Ffh and a 4.5S RNA molecule.

It localises to the cell inner membrane. It is found in the cytoplasm. The catalysed reaction is GTP + H2O = GDP + phosphate + H(+). Its function is as follows. Involved in targeting and insertion of nascent membrane proteins into the cytoplasmic membrane. Acts as a receptor for the complex formed by the signal recognition particle (SRP) and the ribosome-nascent chain (RNC). Interaction with SRP-RNC leads to the transfer of the RNC complex to the Sec translocase for insertion into the membrane, the hydrolysis of GTP by both Ffh and FtsY, and the dissociation of the SRP-FtsY complex into the individual components. The protein is Signal recognition particle receptor FtsY of Nitratidesulfovibrio vulgaris (strain ATCC 29579 / DSM 644 / CCUG 34227 / NCIMB 8303 / VKM B-1760 / Hildenborough) (Desulfovibrio vulgaris).